The primary structure comprises 584 residues: Glycosyltransferase family 92 protein Os08g0121900 (584 aa).

A compositionally biased stretch (basic and acidic residues) spans methionine 1 to leucine 10. The tract at residues methionine 1–arginine 33 is disordered. Positions lysine 16–glycine 28 are enriched in gly residues. Residues phenylalanine 43–isoleucine 63 traverse the membrane as a helical segment. One can recognise a GT92 domain in the interval histidine 314–tyrosine 525.

It belongs to the glycosyltransferase 92 family.

Its subcellular location is the membrane. The polypeptide is Glycosyltransferase family 92 protein Os08g0121900 (Oryza sativa subsp. japonica (Rice)).